Consider the following 290-residue polypeptide: Diaminopimelate epimerase (290 aa).

Positions 11 and 78 each coordinate substrate. Cys87 acts as the Proton donor in catalysis. Substrate is bound by residues 88–89 (GN), Asn163, Asn199, and 217–218 (ER). Residue Cys226 is the Proton acceptor of the active site. Residue 227–228 (GT) coordinates substrate.

It belongs to the diaminopimelate epimerase family. In terms of assembly, homodimer.

The protein resides in the cytoplasm. The catalysed reaction is (2S,6S)-2,6-diaminopimelate = meso-2,6-diaminopimelate. Its pathway is amino-acid biosynthesis; L-lysine biosynthesis via DAP pathway; DL-2,6-diaminopimelate from LL-2,6-diaminopimelate: step 1/1. Functionally, catalyzes the stereoinversion of LL-2,6-diaminopimelate (L,L-DAP) to meso-diaminopimelate (meso-DAP), a precursor of L-lysine and an essential component of the bacterial peptidoglycan. This is Diaminopimelate epimerase from Mycobacterium ulcerans (strain Agy99).